The primary structure comprises 185 residues: Peptide deformylase (185 aa).

Cys-109 and His-152 together coordinate Fe cation. Glu-153 is a catalytic residue. Fe cation is bound at residue His-156.

Belongs to the polypeptide deformylase family. It depends on Fe(2+) as a cofactor.

The enzyme catalyses N-terminal N-formyl-L-methionyl-[peptide] + H2O = N-terminal L-methionyl-[peptide] + formate. Removes the formyl group from the N-terminal Met of newly synthesized proteins. Requires at least a dipeptide for an efficient rate of reaction. N-terminal L-methionine is a prerequisite for activity but the enzyme has broad specificity at other positions. The protein is Peptide deformylase of Roseiflexus castenholzii (strain DSM 13941 / HLO8).